The sequence spans 107 residues: METSNGTETWYKSLHAVLKALNTTLHSHLLCRPGPGPGSGTGPDNQTEDHRASLPGRNDNSYMYILFVMFLFAVTVGSLILGYTRSRKVDKRSDPYHVYIKNRVSMI.

N-linked (GlcNAc...) asparagine glycans are attached at residues Asn-5, Asn-22, and Asn-45. Positions 31–54 (CRPGPGPGSGTGPDNQTEDHRASL) are disordered. The chain crosses the membrane as a helical span at residues 61-81 (SYMYILFVMFLFAVTVGSLIL). The segment at 72 to 83 (FAVTVGSLILGY) is interaction with KCNQ1. Over 82–103 (GYTRSRKVDKRSDPYHVYIKNR) the chain is Cytoplasmic.

The protein belongs to the potassium channel KCNE family. In terms of assembly, interacts with KCNB1. Interacts with KCNC2. Associates with KCNC4/Kv3.4. Interacts with KCNQ1; associates with a KCNQ1:KCNE3 stoichiometry of 4:4; produces a current with nearly instantaneous activation with a linear current-voltage relationship and alters membrane raft localization; affects KCNQ1 structure and gating properties.

It localises to the cell membrane. It is found in the cytoplasm. The protein localises to the perikaryon. The protein resides in the cell projection. Its subcellular location is the dendrite. It localises to the membrane raft. In terms of biological role, ancillary protein that functions as a regulatory subunit of the voltage-gated potassium (Kv) channel complex composed of pore-forming and potassium-conducting alpha subunits and of regulatory beta subunits. KCNE3 beta subunit modulates the gating kinetics and enhances stability of the channel complex. Alters the gating of the delayed rectifier Kv channel containing KCNB1 alpha subunit. Associates with KCNC4/Kv3.4 alpha subunit to form the subthreshold Kv channel in skeletal muscle and to establish the resting membrane potential (RMP) in muscle cells. Association with KCNQ1/KCLQT1 alpha subunit may form the intestinal cAMP-stimulated potassium channel involved in chloride secretion that produces a current with nearly instantaneous activation with a linear current-voltage relationship. This is Potassium voltage-gated channel subfamily E member 3 from Rattus norvegicus (Rat).